Consider the following 364-residue polypeptide: Chorismate synthase (364 aa).

The disordered stretch occupies residues 41–60 (MQHDLDRRRPGTSRYTTARR). 2 residues coordinate NADP(+): Arg-48 and Arg-54. FMN is bound by residues 125–127 (RSS), 238–239 (NA), Gly-278, 293–297 (KPTSS), and Arg-319.

The protein belongs to the chorismate synthase family. In terms of assembly, homotetramer. It depends on FMNH2 as a cofactor.

The catalysed reaction is 5-O-(1-carboxyvinyl)-3-phosphoshikimate = chorismate + phosphate. It functions in the pathway metabolic intermediate biosynthesis; chorismate biosynthesis; chorismate from D-erythrose 4-phosphate and phosphoenolpyruvate: step 7/7. In terms of biological role, catalyzes the anti-1,4-elimination of the C-3 phosphate and the C-6 proR hydrogen from 5-enolpyruvylshikimate-3-phosphate (EPSP) to yield chorismate, which is the branch point compound that serves as the starting substrate for the three terminal pathways of aromatic amino acid biosynthesis. This reaction introduces a second double bond into the aromatic ring system. The polypeptide is Chorismate synthase (Shewanella baltica (strain OS223)).